Reading from the N-terminus, the 310-residue chain is Apolipoprotein E (310 aa).

The first 18 residues, Met1–Ser18, serve as a signal peptide directing secretion. 8 consecutive repeat copies span residues Val72–Gly93, Pro94–Gly115, Ala116–Gly137, Gln138–Met159, Arg160–Glu181, Arg182–Ala203, Asn204–Arg225, and Gly226–Glu247. The segment at Val72–Glu247 is 8 X 22 AA approximate tandem repeats. Methionine sulfoxide is present on Met135. The LDL and other lipoprotein receptors binding stretch occupies residues His150 to Arg160. Positions His150–Arg160 are LDL receptor binding. Met154–Arg157 is a binding site for heparin. Residues Thr202–Met282 are lipid-binding and lipoprotein association. Gly221–Leu228 serves as a coordination point for heparin. The homooligomerization stretch occupies residues Gln258–Gln310. The interval Arg270 to Met282 is specificity for association with VLDL.

The protein belongs to the apolipoprotein A1/A4/E family. In terms of assembly, homotetramer. May interact with ABCA1; functionally associated with ABCA1 in the biogenesis of HDLs. May interact with APP/A4 amyloid-beta peptide; the interaction is extremely stable in vitro but its physiological significance is unclear. May interact with MAPT. May interact with MAP2. In the cerebrospinal fluid, interacts with secreted SORL1. Interacts with PMEL; this allows the loading of PMEL luminal fragment on ILVs to induce fibril nucleation. In terms of processing, APOE exists as multiple glycosylated and sialylated glycoforms within cells and in plasma. The extent of glycosylation and sialylation are tissue and context specific. Post-translationally, glycated in plasma VLDL. Phosphorylated by FAM20C in the extracellular medium.

The protein localises to the secreted. It localises to the extracellular space. The protein resides in the extracellular matrix. Its subcellular location is the extracellular vesicle. It is found in the endosome. The protein localises to the multivesicular body. APOE is an apolipoprotein, a protein associating with lipid particles, that mainly functions in lipoprotein-mediated lipid transport between organs via the plasma and interstitial fluids. APOE is a core component of plasma lipoproteins and is involved in their production, conversion and clearance. Apolipoproteins are amphipathic molecules that interact both with lipids of the lipoprotein particle core and the aqueous environment of the plasma. As such, APOE associates with chylomicrons, chylomicron remnants, very low density lipoproteins (VLDL) and intermediate density lipoproteins (IDL) but shows a preferential binding to high-density lipoproteins (HDL). It also binds a wide range of cellular receptors including the LDL receptor/LDLR, the LDL receptor-related proteins LRP1, LRP2 and LRP8 and the very low-density lipoprotein receptor/VLDLR that mediate the cellular uptake of the APOE-containing lipoprotein particles. Finally, APOE also has a heparin-binding activity and binds heparan-sulfate proteoglycans on the surface of cells, a property that supports the capture and the receptor-mediated uptake of APOE-containing lipoproteins by cells. A main function of APOE is to mediate lipoprotein clearance through the uptake of chylomicrons, VLDLs, and HDLs by hepatocytes. APOE is also involved in the biosynthesis by the liver of VLDLs as well as their uptake by peripheral tissues ensuring the delivery of triglycerides and energy storage in muscle, heart and adipose tissues. By participating in the lipoprotein-mediated distribution of lipids among tissues, APOE plays a critical role in plasma and tissues lipid homeostasis. APOE is also involved in two steps of reverse cholesterol transport, the HDLs-mediated transport of cholesterol from peripheral tissues to the liver, and thereby plays an important role in cholesterol homeostasis. First, it is functionally associated with ABCA1 in the biogenesis of HDLs in tissues. Second, it is enriched in circulating HDLs and mediates their uptake by hepatocytes. APOE also plays an important role in lipid transport in the central nervous system, regulating neuron survival and sprouting. The polypeptide is Apolipoprotein E (Apoe) (Grammomys surdaster (African woodland thicket rat)).